The following is a 441-amino-acid chain: Ribosomal protein uS12 methylthiotransferase RimO (441 aa).

Positions 8-118 (PKIGFVSLGC…VLEHVHHYTP (111 aa)) constitute an MTTase N-terminal domain. [4Fe-4S] cluster-binding residues include Cys-17, Cys-53, Cys-82, Cys-150, Cys-154, and Cys-157. The 238-residue stretch at 136-373 (LTPRHYAYLK…MQLQQQISAE (238 aa)) folds into the Radical SAM core domain. The region spanning 376–441 (QEKVGREILV…DEYDLWGTRV (66 aa)) is the TRAM domain.

It belongs to the methylthiotransferase family. RimO subfamily. Requires [4Fe-4S] cluster as cofactor.

The protein resides in the cytoplasm. It catalyses the reaction L-aspartate(89)-[ribosomal protein uS12]-hydrogen + (sulfur carrier)-SH + AH2 + 2 S-adenosyl-L-methionine = 3-methylsulfanyl-L-aspartate(89)-[ribosomal protein uS12]-hydrogen + (sulfur carrier)-H + 5'-deoxyadenosine + L-methionine + A + S-adenosyl-L-homocysteine + 2 H(+). Its function is as follows. Catalyzes the methylthiolation of an aspartic acid residue of ribosomal protein uS12. This is Ribosomal protein uS12 methylthiotransferase RimO from Klebsiella pneumoniae subsp. pneumoniae (strain ATCC 700721 / MGH 78578).